Here is a 181-residue protein sequence, read N- to C-terminus: Protein CENTRORADIALIS (181 aa).

It belongs to the phosphatidylethanolamine-binding protein family. In terms of assembly, may form homodimers in solution.

The protein localises to the cytoplasm. Expression of CEN leads to a morphological switch between shoot growth and the development of flower structures (inflorescence). May form complexes with phosphorylated ligands by interfering with kinases and their effectors. The polypeptide is Protein CENTRORADIALIS (CEN) (Antirrhinum majus (Garden snapdragon)).